A 483-amino-acid chain; its full sequence is MHQLTLAEIARGLADKSFSSEELTGALLARIKQLDPQINSFISVTEDLALGQARAADARRAAGETSALLGAPIAHKDLFCTNGVRTSCGSKMLDNFKAPYDATVVAKLAEAGMVTLGKTNMDEFAMGSANESSHYGAVKNPWNLEHVPGGSSGGSAAAVAARLLPATTGTDTGGSIRQPAALTNLTGLKPTYGRVSRWGMIAYASSLDQGGPLARTAEDCALLLQGMAGFDAKDSTSIEEPVPDYSASLNASLQGLRIGLPKEYFGAGLDPRIADLVQASVKELEKLGAVVKEISLPNMQHAIPAYYVIAPAEASSNLSRFDGVRFGYRCEEPKDLTDLYKRSRGEGFGVEVQRRIMVGTYALSAGYYDAYYVKAQQIRRLIKNDFMAAFNDVDLILGPTTPNPAWKLGAKSSDPVAAYLEDVYTITANLAGLPGLSMPAGFVDGLPVGVQLLAPYFQEGRLLNVAHRYQQVTDWHTRAPNGF.

Catalysis depends on charge relay system residues Lys76 and Ser151. Ser175 functions as the Acyl-ester intermediate in the catalytic mechanism.

The protein belongs to the amidase family. GatA subfamily. Heterotrimer of A, B and C subunits.

The catalysed reaction is L-glutamyl-tRNA(Gln) + L-glutamine + ATP + H2O = L-glutaminyl-tRNA(Gln) + L-glutamate + ADP + phosphate + H(+). In terms of biological role, allows the formation of correctly charged Gln-tRNA(Gln) through the transamidation of misacylated Glu-tRNA(Gln) in organisms which lack glutaminyl-tRNA synthetase. The reaction takes place in the presence of glutamine and ATP through an activated gamma-phospho-Glu-tRNA(Gln). This Pseudomonas putida (strain ATCC 47054 / DSM 6125 / CFBP 8728 / NCIMB 11950 / KT2440) protein is Glutamyl-tRNA(Gln) amidotransferase subunit A.